Here is an 833-residue protein sequence, read N- to C-terminus: Zinc transporter ZIP10 (833 aa).

Positions Met1–Cys25 are cleaved as a signal peptide. The span at Asp30–Ser48 shows a compositional bias: basic and acidic residues. Disordered regions lie at residues Asp30–Gln54 and Ala137–Asp167. Over residues Ala137 to Ser147 the composition is skewed to polar residues. Residues Lys152–Asp167 show a composition bias toward basic and acidic residues. N-linked (GlcNAc...) asparagine glycosylation is found at Asn191 and Asn198. Residues Ser200–Pro209 are compositionally biased toward basic and acidic residues. Disordered regions lie at residues Ser200–His257 and Arg271–Arg335. The N-linked (GlcNAc...) asparagine glycan is linked to Asn218. Residues Val229–Lys241 are compositionally biased toward basic residues. 2 stretches are compositionally biased toward basic and acidic residues: residues His281 to His315 and Ser326 to Arg335. An N-linked (GlcNAc...) asparagine glycan is attached at Asn341. 2 helical membrane passes run Ile413–Ile433 and Phe440–His460. Residues Gln466–His485 form a disordered region. Residues Val497–Ile517 form a helical membrane-spanning segment. Residues Thr538 and Thr555 each carry the phosphothreonine modification. Ser593 carries the phosphoserine modification. The next 4 helical transmembrane spans lie at Ala689 to Phe709, Ile734 to Val754, Ile761 to Met781, and Phe803 to Tyr823.

This sequence belongs to the ZIP transporter (TC 2.A.5) family. As to quaternary structure, interacts with SLC39A6. This interaction triggers cells to undergo EMT and mitosis. Found in a complex with SLC39A6, SLC39A10 and with the 'Ser-727' phosphorylated form of STAT3 throughout mitosis. Found in a complex with SLC39A6, SLC39A10 and with NCAM1; this complex controls NCAM1 phosphorylation and integration into focal adhesion complexes during epithelial-tomesenchymal transition. Found in a complex with SLC39A6, SLC39A10 and with GSK3B that controls NCAM1 phosphorylation. In terms of processing, undergoes N-terminal ectodomain shedding. Expressed in the liver, kidney and brain.

The protein localises to the cell membrane. It is found in the apical cell membrane. It carries out the reaction Zn(2+)(in) = Zn(2+)(out). Its function is as follows. Zinc-influx transporter. When associated with SLC39A6, the heterodimer formed by SLC39A10 and SLC39A6 mediates cellular zinc uptake to trigger cells to undergo epithelial-to-mesenchymal transition (EMT). mediates cellular zinc uptake to trigger cells to undergo epithelial-to-mesenchymal transition (EMT). SLC39A10-SLC39A6 heterodimers play also an essentiel role in initiating mitosis by importing zinc into cells to initiate a pathway resulting in the onset of mitosis. Plays an important for both mature B-cell maintenance and humoral immune responses. When associated with SLC39A10, the heterodimer controls NCAM1 phosphorylation and integration into focal adhesion complexes during EMT. In Mus musculus (Mouse), this protein is Zinc transporter ZIP10.